A 130-amino-acid polypeptide reads, in one-letter code: Metastasis-suppressor KiSS-1 (130 aa).

The N-terminal stretch at 1–19 (MISLASWQLLLLLCVASFG) is a signal peptide. The tract at residues 52–91 (RYAESKPGAAGLRARRTSPCPPVENPTGHQRPPCATRSRL) is disordered. C71 and C85 form a disulfide bridge. Y110 carries the phosphotyrosine modification. The essential for receptor binding and receptor activation stretch occupies residues 110 to 119 (YNWNSFGLRY). Y119 is modified (tyrosine amide).

Belongs to the KISS1 family. In terms of tissue distribution, highest levels in the cecum and colon. Moderate levels present in the liver, spleen, kidney, ovary, uterus and small intestine. Low levels in the stomach, pancreas and placenta. Expressed only moderately in the placenta. Persistent expression is detected in hypothalamus throughout postnatal development, with maximum expression levels at puberty in both male and female. Hypothalamic expression is sensitive to neonatal imprinting by estrogen. Expression is higher in the hypothalamus than in the brainstem and spinal cord. In the brain, metastin-like immunoreactivity is found mainly in three groups of cells: dorsomedial hypothalamic nucleus, nucleus of the solitary tract, and caudal ventrolateral medulla.

It is found in the secreted. In terms of biological role, metastasis suppressor protein. May regulate events downstream of cell-matrix adhesion, perhaps involving cytoskeletal reorganization. Generates a C-terminally amidated peptide, metastin which functions as the endogenous ligand of the G-protein coupled receptor GPR54. The receptor is also essential for normal gonadotropin-released hormone physiology and for puberty. The hypothalamic KiSS1/GPR54 system is a pivotal factor in central regulation of the gonadotropic axis at puberty and in adulthood. Intracerebroventricular administration induces an increase in serum LH and FSH levels in prepubertal male and female as well as in adult animals. The protein is Metastasis-suppressor KiSS-1 (Kiss1) of Rattus norvegicus (Rat).